Consider the following 90-residue polypeptide: Acyl-CoA-binding protein homolog (90 aa).

Residues 3 to 89 (LQEQFDQAAS…VESLIASLGL (87 aa)) enclose the ACB domain. An acyl-CoA-binding positions include Arg-15, 30–34 (YALFK), Lys-53, Lys-57, and Tyr-76.

This sequence belongs to the ACBP family.

Functionally, binds medium- and long-chain acyl-CoA esters with very high affinity and may function as an intracellular carrier of acyl-CoA esters. This chain is Acyl-CoA-binding protein homolog, found in Manduca sexta (Tobacco hawkmoth).